The sequence spans 100 residues: Urease subunit gamma (100 aa).

Belongs to the urease gamma subunit family. In terms of assembly, heterotrimer of UreA (gamma), UreB (beta) and UreC (alpha) subunits. Three heterotrimers associate to form the active enzyme.

The protein localises to the cytoplasm. The enzyme catalyses urea + 2 H2O + H(+) = hydrogencarbonate + 2 NH4(+). It participates in nitrogen metabolism; urea degradation; CO(2) and NH(3) from urea (urease route): step 1/1. This Methylobacillus flagellatus (strain ATCC 51484 / DSM 6875 / VKM B-1610 / KT) protein is Urease subunit gamma.